Reading from the N-terminus, the 367-residue chain is Peptide chain release factor 1 (367 aa).

Gln-243 carries the N5-methylglutamine modification.

The protein belongs to the prokaryotic/mitochondrial release factor family. Post-translationally, methylated by PrmC. Methylation increases the termination efficiency of RF1.

The protein localises to the cytoplasm. Its function is as follows. Peptide chain release factor 1 directs the termination of translation in response to the peptide chain termination codons UAG and UAA. The protein is Peptide chain release factor 1 of Acidovorax sp. (strain JS42).